Consider the following 203-residue polypeptide: MKLWMRKTLVVLFTIVTFGLVSPPAALMADKPSGQPSSLEQNDYTAFYDEHDLYDDESDDRRDPELLFQSYKEQLLDSAEDQSFLKFGSRIAPVIEDDYRKEILPKIENVISDYLATLQDDEAYQDVVISSMPSAGKTEKIFNVYNRTTGEDLLRFHVRRDHPPHDGYWFNFHYHTAEDGFQSHHELGSIYWDRNTPPNWMSA.

The chain crosses the membrane as a helical span at residues 9 to 29; sequence LVVLFTIVTFGLVSPPAALMA.

It localises to the membrane. This is an uncharacterized protein from Bacillus subtilis (strain 168).